Consider the following 357-residue polypeptide: MSSLSDLINFNLSDSTEKIIAEYIWVGGSGIDIRSKARTLPGPVSDPAKLPKWNYDGSSTNQAPGKDSEVILYPQAIFKDPFRRGNNILVICDVYTPAGEPLPTNKRYNAAKIFSHPDVAAEVPWYGIEQEYTLLQKDINWPLGWPIGGYPGKQGPYYCGIGADKAYGRDIVDAHYKACLFAGINISGINGEVMPGQWEFQVGPSVGISAGDEIWAARYILERITEIAGVVVSFDPKPIPGDWNGAGAHANFSTKSMRENGGYEVIKKAIEKLGLRHKEHIAAYGEGNERRLTGKHETADINVFSWGVANRGSSIRVGRDTEKDGKGYFEDRRPASNMDPYVVTSMIAETTILWKKP.

The GS beta-grasp domain occupies 19 to 99 (IIAEYIWVGG…VICDVYTPAG (81 aa)). Residues 106 to 357 (KRYNAAKIFS…AETTILWKKP (252 aa)) enclose the GS catalytic domain.

It belongs to the glutamine synthetase family. In terms of assembly, homooctamer.

The protein localises to the cytoplasm. The catalysed reaction is L-glutamate + NH4(+) + ATP = L-glutamine + ADP + phosphate + H(+). The chain is Glutamine synthetase root isozyme A (GS3A) from Pisum sativum (Garden pea).